A 435-amino-acid chain; its full sequence is Ribosomal protein uS12 methylthiotransferase RimO (435 aa).

One can recognise an MTTase N-terminal domain in the interval 2 to 118 (KKFHIVKLGC…IVEKIENGEY (117 aa)). Residues cysteine 11, cysteine 47, cysteine 81, cysteine 150, cysteine 154, and cysteine 157 each coordinate [4Fe-4S] cluster. Residues 136-364 (IPDSHYAYVK…MTVQSEISKN (229 aa)) form the Radical SAM core domain. Residues 367 to 435 (EKYIGETLEV…EYDLEGEIVE (69 aa)) enclose the TRAM domain.

This sequence belongs to the methylthiotransferase family. RimO subfamily. It depends on [4Fe-4S] cluster as a cofactor.

It is found in the cytoplasm. It catalyses the reaction L-aspartate(89)-[ribosomal protein uS12]-hydrogen + (sulfur carrier)-SH + AH2 + 2 S-adenosyl-L-methionine = 3-methylsulfanyl-L-aspartate(89)-[ribosomal protein uS12]-hydrogen + (sulfur carrier)-H + 5'-deoxyadenosine + L-methionine + A + S-adenosyl-L-homocysteine + 2 H(+). Its function is as follows. Catalyzes the methylthiolation of an aspartic acid residue of ribosomal protein uS12. The protein is Ribosomal protein uS12 methylthiotransferase RimO of Petrotoga mobilis (strain DSM 10674 / SJ95).